We begin with the raw amino-acid sequence, 302 residues long: Homoserine O-acetyltransferase 1 (302 aa).

Cys142 functions as the Acyl-thioester intermediate in the catalytic mechanism. Lys163 and Ser192 together coordinate substrate. Residue His235 is the Proton acceptor of the active site. The active site involves Glu237. A substrate-binding site is contributed by Arg249.

Belongs to the MetA family.

The protein localises to the cytoplasm. It catalyses the reaction L-homoserine + acetyl-CoA = O-acetyl-L-homoserine + CoA. The protein operates within amino-acid biosynthesis; L-methionine biosynthesis via de novo pathway; O-acetyl-L-homoserine from L-homoserine: step 1/1. In terms of biological role, transfers an acetyl group from acetyl-CoA to L-homoserine, forming acetyl-L-homoserine. The protein is Homoserine O-acetyltransferase 1 of Ilyobacter polytropus (strain ATCC 51220 / DSM 2926 / LMG 16218 / CuHBu1).